The chain runs to 904 residues: Translation initiation factor IF-2 (904 aa).

Disordered regions lie at residues Tyr-103 to Glu-122, Asn-137 to Gly-252, and His-267 to Pro-315. Residues Asn-137–Glu-177 are compositionally biased toward basic and acidic residues. 2 stretches are compositionally biased toward low complexity: residues Glu-178–Ala-230 and Arg-280–Arg-293. The 170-residue stretch at Ser-403–Lys-572 folds into the tr-type G domain. The segment at Gly-412 to Thr-419 is G1. Residue Gly-412–Thr-419 coordinates GTP. The G2 stretch occupies residues Gly-437–His-441. The interval Asp-458–Gly-461 is G3. GTP-binding positions include Asp-458–His-462 and Asn-512–Asp-515. The tract at residues Asn-512 to Asp-515 is G4. The interval Ser-548 to Lys-550 is G5.

This sequence belongs to the TRAFAC class translation factor GTPase superfamily. Classic translation factor GTPase family. IF-2 subfamily.

It is found in the cytoplasm. In terms of biological role, one of the essential components for the initiation of protein synthesis. Protects formylmethionyl-tRNA from spontaneous hydrolysis and promotes its binding to the 30S ribosomal subunits. Also involved in the hydrolysis of GTP during the formation of the 70S ribosomal complex. This chain is Translation initiation factor IF-2, found in Xanthomonas euvesicatoria pv. vesicatoria (strain 85-10) (Xanthomonas campestris pv. vesicatoria).